The chain runs to 511 residues: Bifunctional purine biosynthesis protein PurH (511 aa).

The 145-residue stretch at 1-145 folds into the MGS-like domain; it reads MKKRALVSVS…KNHKFVSVIV (145 aa).

It belongs to the PurH family.

The catalysed reaction is (6R)-10-formyltetrahydrofolate + 5-amino-1-(5-phospho-beta-D-ribosyl)imidazole-4-carboxamide = 5-formamido-1-(5-phospho-D-ribosyl)imidazole-4-carboxamide + (6S)-5,6,7,8-tetrahydrofolate. It catalyses the reaction IMP + H2O = 5-formamido-1-(5-phospho-D-ribosyl)imidazole-4-carboxamide. It participates in purine metabolism; IMP biosynthesis via de novo pathway; 5-formamido-1-(5-phospho-D-ribosyl)imidazole-4-carboxamide from 5-amino-1-(5-phospho-D-ribosyl)imidazole-4-carboxamide (10-formyl THF route): step 1/1. The protein operates within purine metabolism; IMP biosynthesis via de novo pathway; IMP from 5-formamido-1-(5-phospho-D-ribosyl)imidazole-4-carboxamide: step 1/1. The sequence is that of Bifunctional purine biosynthesis protein PurH from Bacillus cytotoxicus (strain DSM 22905 / CIP 110041 / 391-98 / NVH 391-98).